The following is a 954-amino-acid chain: MAGNKDSSWDDIKNEGIDLEKIPIEEVLTQLRCTREGLTSDEGQTRLEIFGPNKLEEKKENKVLKFLGFMWNPLSWVMELAAIMAIALANGGGRPPDWQDFVGITVLLIINSTISFIEENNAGNAAAALMAGLAPKTKVLRDGKWSEQEAAILVPGDIISIKLGDIVPADGRLLDGDPLKIDQSALTGESLPVTKHPGQEVYSGSTCKQGELEAVVIATGVHTFFGKAAHLVDSTNQEGHFQKVLTAIGNFCICSIAIGMLIEIVVMYPIQKRAYRDGIDNLLVLLIGGIPIAMPTVLSVTMAIGSHRLSQQGAITKRMTAIEEMAGMDVLCSDKTGTLTLNKLTVDKSMVEVFVKDLDKDQLLVNAARASRVENQDAIDACIVGMLGDPREAREGITEVHFFPFNPVDKRTAITYIDANGNWHRVSKGAPEQIIELCNLREDASKRAHDIIDKFADRGLRSLAVGRQTVSEKDKNSPGEPWQFLGLLPLFDPPRHDSAETIRRALDLGVNVKMITGDQLAIGKETGRRLGMGTNMYPSSALLGQDKDESIASLPVDELIEKADGFAGVFPEHKYEIVKRLQEMKHICGMTGDGVNDAPALKRADIGIAVADATDAARSASDIVLTEPGLSVIVSAVLTSRAIFQRMKNYTIYAVSITIRIVMGFMLLALIWKFDFSPFMVLIVAILNDGTIMTISKDRVKPSPLPDSWKLKEIFATGVVLGTYLAVMTVVFFWAAESTDFFSAKFGVRSISGNPHELTAAVYLQVSIVSQALIFVTRSRSWSYVERPGFWLISAFFMAQLIATLIAVYANWNFARIRGIGWGWAGVIWLYSIVFYIPLDILKFIIRYSLSGRAWDNVIENKTAFTSKKDYGKGEREAQWAQAQRTLHGLQPAQTSDMFNDKSTYRELSEIADQAKRRAEVARLRERHTLKGHVESVVKQKGLDIEAIQQHYTL.

At 1-66 (MAGNKDSSWD…EKKENKVLKF (66 aa)) the chain is on the cytoplasmic side. The chain crosses the membrane as a helical span at residues 67 to 86 (LGFMWNPLSWVMELAAIMAI). The Extracellular segment spans residues 87-98 (ALANGGGRPPDW). A helical transmembrane segment spans residues 99 to 119 (QDFVGITVLLIINSTISFIEE). Residues 120 to 248 (NNAGNAAAAL…GHFQKVLTAI (129 aa)) are Cytoplasmic-facing. The helical transmembrane segment at 249-269 (GNFCICSIAIGMLIEIVVMYP) threads the bilayer. Residues 270–278 (IQKRAYRDG) lie on the Extracellular side of the membrane. Residues 279 to 296 (IDNLLVLLIGGIPIAMPT) form a helical membrane-spanning segment. Residues 297–648 (VLSVTMAIGS…TSRAIFQRMK (352 aa)) lie on the Cytoplasmic side of the membrane. The active-site 4-aspartylphosphate intermediate is Asp334. Positions 593 and 597 each coordinate Mg(2+). Residues 649–670 (NYTIYAVSITIRIVMGFMLLAL) form a helical membrane-spanning segment. Residues 671 to 675 (IWKFD) lie on the Extracellular side of the membrane. A helical membrane pass occupies residues 676-698 (FSPFMVLIVAILNDGTIMTISKD). Residues 699 to 714 (RVKPSPLPDSWKLKEI) lie on the Cytoplasmic side of the membrane. A helical transmembrane segment spans residues 715 to 735 (FATGVVLGTYLAVMTVVFFWA). At 736–756 (AESTDFFSAKFGVRSISGNPH) the chain is on the extracellular side. A helical transmembrane segment spans residues 757-777 (ELTAAVYLQVSIVSQALIFVT). The Cytoplasmic portion of the chain corresponds to 778-789 (RSRSWSYVERPG). Residues 790-810 (FWLISAFFMAQLIATLIAVYA) traverse the membrane as a helical segment. At 811–818 (NWNFARIR) the chain is on the extracellular side. A helical membrane pass occupies residues 819–839 (GIGWGWAGVIWLYSIVFYIPL). The Cytoplasmic portion of the chain corresponds to 840 to 954 (DILKFIIRYS…IEAIQQHYTL (115 aa)). A Phosphothreonine modification is found at Thr886. Ser936 carries the phosphoserine modification. An interaction with 14-3-3 proteins region spans residues 952-954 (YTL). A Phosphothreonine modification is found at Thr953.

It belongs to the cation transport ATPase (P-type) (TC 3.A.3) family. Type IIIA subfamily. Binds to 14-3-3 proteins. The binding is induced by phosphorylation of Thr-953. Binding to 14-3-3 proteins activates the H(+)-ATPase. Anther specific. Expressed in guard cells.

It is found in the membrane. The enzyme catalyses ATP + H2O + H(+)(in) = ADP + phosphate + 2 H(+)(out). Its function is as follows. The plasma membrane H(+) ATPase of plants and fungi generates a proton gradient that drives the active transport of nutrients by H(+)-symport. The resulting external acidification and/or internal alkinization may mediate growth responses. In Arabidopsis thaliana (Mouse-ear cress), this protein is ATPase 9, plasma membrane-type (AHA9).